A 109-amino-acid chain; its full sequence is Mitochondrial import inner membrane translocase subunit TIM12 (109 aa).

The residue at position 2 (serine 2) is an N-acetylserine. The Twin CX3C motif motif lies at 40-66 (CLEKCIPHEGFGEPDLTKGEQCCIDRC). Intrachain disulfides connect cysteine 40–cysteine 66 and cysteine 44–cysteine 62.

Belongs to the small Tim family. Component of the TIM22 complex, whose core is composed of TIM18, TIM22 and TIM54, associated with the peripheral proteins MRS5/TIM12 and the 70 kDa heterohexamer composed of TIM9 and TIM10 (or TIM8 and TIM13). Interacts directly with both the TIM22 protein and the TIM9-TIM10 heterohexamer. Interacts with multi-pass transmembrane proteins in transit.

The protein localises to the mitochondrion inner membrane. It localises to the mitochondrion intermembrane space. In terms of biological role, essential component of the TIM22 complex, a complex that mediates the import and insertion of multi-pass transmembrane proteins into the mitochondrial inner membrane. The TIM22 complex forms a twin-pore translocase that uses the membrane potential as external driving force. In the TIM22 complex, it acts as a docking point for the soluble TIM9-TIM10 heterohexamer that guides the target proteins in transit through the aqueous mitochondrial intermembrane space. The protein is Mitochondrial import inner membrane translocase subunit TIM12 (TIM12) of Saccharomyces cerevisiae (strain ATCC 204508 / S288c) (Baker's yeast).